A 57-amino-acid polypeptide reads, in one-letter code: Conotoxin Cal6.39 (57 aa).

Residues 1–18 (MSGTTVLLLTCLFLVTMA) form the signal peptide. Intrachain disulfides connect C22–C36, C29–C46, and C35–C52.

Expressed by the venom duct.

It localises to the secreted. Probable neurotoxin. The protein is Conotoxin Cal6.39 of Californiconus californicus (California cone).